Here is a 387-residue protein sequence, read N- to C-terminus: 1-deoxy-D-xylulose 5-phosphate reductoisomerase (387 aa).

Residues Thr-10, Gly-11, Ser-12, Ile-13, Gly-36, Lys-37, Asn-38, and Asn-123 each contribute to the NADPH site. Lys-124 contacts 1-deoxy-D-xylulose 5-phosphate. Position 125 (Glu-125) interacts with NADPH. Residue Asp-149 coordinates Mn(2+). 1-deoxy-D-xylulose 5-phosphate is bound by residues Ser-150, Glu-151, Ser-175, and His-198. Glu-151 serves as a coordination point for Mn(2+). Gly-204 serves as a coordination point for NADPH. 1-deoxy-D-xylulose 5-phosphate is bound by residues Ser-211, Asn-216, Lys-217, and Glu-220. Glu-220 serves as a coordination point for Mn(2+).

This sequence belongs to the DXR family. Mg(2+) is required as a cofactor. The cofactor is Mn(2+).

It catalyses the reaction 2-C-methyl-D-erythritol 4-phosphate + NADP(+) = 1-deoxy-D-xylulose 5-phosphate + NADPH + H(+). It participates in isoprenoid biosynthesis; isopentenyl diphosphate biosynthesis via DXP pathway; isopentenyl diphosphate from 1-deoxy-D-xylulose 5-phosphate: step 1/6. In terms of biological role, catalyzes the NADPH-dependent rearrangement and reduction of 1-deoxy-D-xylulose-5-phosphate (DXP) to 2-C-methyl-D-erythritol 4-phosphate (MEP). The chain is 1-deoxy-D-xylulose 5-phosphate reductoisomerase from Pelotomaculum thermopropionicum (strain DSM 13744 / JCM 10971 / SI).